A 498-amino-acid chain; its full sequence is Putrescine N-hydroxylase (498 aa).

Phenylalanine 23, aspartate 43, lysine 45, tryptophan 50, histidine 51, and glutamine 62 together coordinate FAD. NADP(+)-binding residues include glutamine 62 and arginine 104. Valine 127 provides a ligand contact to FAD. NADP(+)-binding residues include serine 207, arginine 231, tyrosine 275, and leucine 309. FAD-binding residues include asparagine 386, proline 397, and leucine 399. Over residues 443–474 (LESNTHSAVTPSKTRQGLNPSAKSVQQPSIEP) the composition is skewed to polar residues. Residues 443-498 (LESNTHSAVTPSKTRQGLNPSAKSVQQPSIEPQTALRIAPTGGNVSALMAPNKEAQ) are disordered.

The protein belongs to the lysine N(6)-hydroxylase/L-ornithine N(5)-oxygenase family. FAD is required as a cofactor.

It carries out the reaction putrescine + NADPH + O2 = N-hydroxyputrescine + NADP(+) + H2O. It participates in siderophore biosynthesis. Functionally, N-hydroxylating monooxygenase involved in the biosynthesis of the siderophore putrebactin. Catalyzes the N-hydroxylation of the aliphatic diamine putrescine into N-hydroxyputrescine (NHP). The polypeptide is Putrescine N-hydroxylase (Shewanella oneidensis (strain ATCC 700550 / JCM 31522 / CIP 106686 / LMG 19005 / NCIMB 14063 / MR-1)).